A 730-amino-acid polypeptide reads, in one-letter code: Guanyl-specific ribonuclease pgl-1 (730 aa).

Positions 205–447 (KQLMLDGPKS…VTRIVESLEK (243 aa)) are involved in dimerization. His437 acts as the Proton acceptor in catalysis. Composition is skewed to polar residues over residues 452 to 472 (DTPS…QDSA) and 568 to 595 (DANQ…SPTK). 3 disordered regions span residues 452-475 (DTPS…AYTK), 567-639 (SDAN…TPMP), and 686-730 (GGRG…RGGF). Residues 674 to 730 (GGGRGGYGGGDRGGRGGYGGDRGGRGGYGGGDRGGRGGYGGDRGRGGYGGRGGRGGF) are RNA-binding RGG-box.

As to quaternary structure, homodimer. Interacts with pgl-2 and pgl-3; this association is not required for P-granule localization of either pgl-2 or pgl-3. Interacts with ife-1. Interacts with prmt-1; the interaction is direct. Interacts with nmad-1. Interacts with P granule components meg-1, meg-3 and meg-4. Does not require metal ions for catalytic activity. serves as cofactor. Methylated at arginine residues in the RNA-binding RGG-box by prmt-1. Methylation promotes P-granule degradation by autophagy. As to expression, expressed in the germline. Expressed in most somatic cells.

It is found in the cytoplasmic granule. It catalyses the reaction [RNA] containing guanosine + H2O = an [RNA fragment]-3'-guanosine-3'-phosphate + a 5'-hydroxy-ribonucleotide-3'-[RNA fragment].. Its activity is regulated as follows. Not inhibited by RNase inhibitor RNasin. Its function is as follows. Guanyl-specific endoribonuclease which cleaves the phosphodiester bond in single-stranded RNA between the 3'-guanylic residue and the 5'-OH residue of adjacent nucleotide, resulting in the formation of a corresponding 2',3'-cyclic phosphate intermediate. Together with the P-granule component pgl-3, is involved in the formation of P-granules. Together with pgl-3, probably recruits other granule components such as pos-1, mex-3 and glh-1 to P-granules. In addition, may act redundantly with pgl-3 to protect germ cells from excessive germline apoptosis during normal oogenesis and development of the two gonadal arms. This may in part be through regulating the localization of sir-2.1 which is involved in germ cell apoptosis. May protect somatic cells from excessive apoptosis during normal development. Essential role in male and female postembryonic germline development; maternally provided protein maintains a population of proliferating germ cells and zygotic expression is required for correct oogenesis. The polypeptide is Guanyl-specific ribonuclease pgl-1 (Caenorhabditis elegans).